The following is a 419-amino-acid chain: Tyrosine--tRNA ligase (419 aa).

Tyrosine 34 provides a ligand contact to L-tyrosine. The 'HIGH' region motif lies at 39–48 (PSGDSMHIGH). L-tyrosine is bound by residues tyrosine 168 and glutamine 172. The 'KMSKS' region signature appears at 230 to 234 (KFGKS). Lysine 233 lines the ATP pocket. The S4 RNA-binding domain maps to 352-418 (VNLVDWLVTL…GKKKYFLVSY (67 aa)).

The protein belongs to the class-I aminoacyl-tRNA synthetase family. TyrS type 1 subfamily. In terms of assembly, homodimer.

It is found in the cytoplasm. The enzyme catalyses tRNA(Tyr) + L-tyrosine + ATP = L-tyrosyl-tRNA(Tyr) + AMP + diphosphate + H(+). In terms of biological role, catalyzes the attachment of tyrosine to tRNA(Tyr) in a two-step reaction: tyrosine is first activated by ATP to form Tyr-AMP and then transferred to the acceptor end of tRNA(Tyr). This chain is Tyrosine--tRNA ligase, found in Listeria innocua serovar 6a (strain ATCC BAA-680 / CLIP 11262).